A 255-amino-acid polypeptide reads, in one-letter code: Anamorsin homolog (255 aa).

Residues Met1–Asp163 are N-terminal SAM-like domain. The linker stretch occupies residues Lys164–Tyr185. [2Fe-2S] cluster contacts are provided by Cys188, Cys195, Cys198, and Cys200. The tract at residues Cys188–Cys200 is fe-S binding site A. Residues Cys224, Cys227, Cys235, and Cys238 each contribute to the [4Fe-4S] cluster site. 2 short sequence motifs (cx2C motif) span residues Cys224–Cys227 and Cys235–Cys238. The tract at residues Cys224–Cys238 is fe-S binding site B.

This sequence belongs to the anamorsin family. As to quaternary structure, monomer. It depends on [2Fe-2S] cluster as a cofactor. [4Fe-4S] cluster is required as a cofactor.

Its subcellular location is the cytoplasm. It localises to the mitochondrion intermembrane space. Its function is as follows. Component of the cytosolic iron-sulfur (Fe-S) protein assembly (CIA) machinery. Required for the maturation of extramitochondrial Fe-S proteins. Part of an electron transfer chain functioning in an early step of cytosolic Fe-S biogenesis, facilitating the de novo assembly of a [4Fe-4S] cluster on the cytosolic Fe-S scaffold complex. Electrons are transferred from NADPH via a FAD- and FMN-containing diflavin oxidoreductase. Together with the diflavin oxidoreductase, also required for the assembly of the diferric tyrosyl radical cofactor of ribonucleotide reductase (RNR), probably by providing electrons for reduction during radical cofactor maturation in the catalytic small subunit. The protein is Anamorsin homolog of Theileria annulata.